A 199-amino-acid chain; its full sequence is 5'-deoxynucleotidase YfbR (199 aa).

Substrate is bound by residues 18–19 and His-33; that span reads RW. The 113-residue stretch at 30 to 142 folds into the HD domain; the sequence is VSEHSLQVAM…VKQADALCAY (113 aa). A divalent metal cation-binding residues include His-33, His-68, and Asp-69. Residues Asp-69, 77–80, and Asp-137 each bind substrate; that span reads DLPT. Asp-137 contacts a divalent metal cation.

Belongs to the 5DNU family. Homodimer. A divalent metal cation serves as cofactor.

The protein localises to the cytoplasm. It catalyses the reaction a 2'-deoxyribonucleoside 5'-phosphate + H2O = a 2'-deoxyribonucleoside + phosphate. Its function is as follows. Catalyzes the strictly specific dephosphorylation of 2'-deoxyribonucleoside 5'-monophosphates. The chain is 5'-deoxynucleotidase YfbR from Salmonella arizonae (strain ATCC BAA-731 / CDC346-86 / RSK2980).